Here is a 354-residue protein sequence, read N- to C-terminus: Uroporphyrinogen decarboxylase (354 aa).

Substrate is bound by residues 27–31, D77, Y153, T208, and H326; that span reads RQAGR.

The protein belongs to the uroporphyrinogen decarboxylase family. Homodimer.

The protein localises to the cytoplasm. The catalysed reaction is uroporphyrinogen III + 4 H(+) = coproporphyrinogen III + 4 CO2. The protein operates within porphyrin-containing compound metabolism; protoporphyrin-IX biosynthesis; coproporphyrinogen-III from 5-aminolevulinate: step 4/4. In terms of biological role, catalyzes the decarboxylation of four acetate groups of uroporphyrinogen-III to yield coproporphyrinogen-III. The protein is Uroporphyrinogen decarboxylase of Neisseria meningitidis serogroup C / serotype 2a (strain ATCC 700532 / DSM 15464 / FAM18).